The chain runs to 344 residues: Arginine N-succinyltransferase (344 aa).

A succinyl-CoA-binding site is contributed by Leu125. The active-site Proton donor is the His229.

Belongs to the arginine N-succinyltransferase family.

It carries out the reaction succinyl-CoA + L-arginine = N(2)-succinyl-L-arginine + CoA + H(+). The protein operates within amino-acid degradation; L-arginine degradation via AST pathway; L-glutamate and succinate from L-arginine: step 1/5. In terms of biological role, catalyzes the transfer of succinyl-CoA to arginine to produce N(2)-succinylarginine. The protein is Arginine N-succinyltransferase of Shigella boydii serotype 4 (strain Sb227).